A 159-amino-acid polypeptide reads, in one-letter code: Small ribosomal subunit protein uS7 (159 aa).

Belongs to the universal ribosomal protein uS7 family. In terms of assembly, part of the 30S ribosomal subunit. Contacts proteins S9 and S11.

One of the primary rRNA binding proteins, it binds directly to 16S rRNA where it nucleates assembly of the head domain of the 30S subunit. Is located at the subunit interface close to the decoding center, probably blocks exit of the E-site tRNA. This chain is Small ribosomal subunit protein uS7, found in Wolbachia pipientis wMel.